Reading from the N-terminus, the 152-residue chain is MDKQLLSENNQLSSEEILGLLPHRFPFALVDRVIEHIPGHKAVALKNVTINEPQFQGHFPERPLMPGVLIVESMAQVGGIIVTQMPDLPKGLFVFAGINNVKFRRPVLPGDQLVITCELLSIKRQRFGKVKGEAHVDGKLVCSGELMFSLVD.

Residue H58 is part of the active site.

It belongs to the thioester dehydratase family. FabZ subfamily.

The protein localises to the cytoplasm. The catalysed reaction is a (3R)-hydroxyacyl-[ACP] = a (2E)-enoyl-[ACP] + H2O. Functionally, involved in unsaturated fatty acids biosynthesis. Catalyzes the dehydration of short chain beta-hydroxyacyl-ACPs and long chain saturated and unsaturated beta-hydroxyacyl-ACPs. In Prochlorococcus marinus (strain MIT 9515), this protein is 3-hydroxyacyl-[acyl-carrier-protein] dehydratase FabZ.